The following is a 323-amino-acid chain: UPF0612 protein C569.01c (323 aa).

Coiled coils occupy residues 27–63 (IKRYERSVDSTLLEIDENKREALEKYIEERDRKMKYE) and 131–225 (NEMN…DARS).

It belongs to the UPF0612 family.

This is UPF0612 protein C569.01c from Schizosaccharomyces pombe (strain 972 / ATCC 24843) (Fission yeast).